Here is a 440-residue protein sequence, read N- to C-terminus: Gamma-aminobutyric acid receptor subunit pi (440 aa).

Positions 1-23 are cleaved as a signal peptide; sequence MKRSLHLTFVCLSLFSARMCVQG. The Extracellular segment spans residues 24–241; sequence NQFNIEVSRS…LVLQFELQRN (218 aa). N-linked (GlcNAc...) asparagine glycans are attached at residues N43, N102, and N145. C160 and C174 form a disulfide bridge. 2 N-linked (GlcNAc...) asparagine glycosylation sites follow: N196 and N228. The chain crosses the membrane as a helical span at residues 242 to 262; that stretch reads VLYFILETYVPSTFLVVLSWV. At 263–270 the chain is on the cytoplasmic side; that stretch reads SFWISLDS. A helical membrane pass occupies residues 271-290; that stretch reads VPARTCIGVTTVLSMTTLMI. The Extracellular segment spans residues 291–301; the sequence is GSRTSLPNTNC. A helical membrane pass occupies residues 302–322; that stretch reads FIKAIDVYLGICFSFVFGALL. Residues 323 to 419 are Cytoplasmic-facing; that stretch reads EYAVAHYSSL…NPSNVDRYSK (97 aa). Residues 420 to 440 traverse the membrane as a helical segment; it reads LLFPLIFMLANVFYWAYYMYF.

Belongs to the ligand-gated ion channel (TC 1.A.9) family. Gamma-aminobutyric acid receptor (TC 1.A.9.5) subfamily. GABRP sub-subfamily. In terms of assembly, heteropentamer, formed by a combination of alpha (GABRA1-6), beta (GABRB1-3), gamma (GABRG1-3), delta (GABRD), epsilon (GABRE), rho (GABRR1-3), pi (GABRP) and theta (GABRQ) chains, each subunit exhibiting distinct physiological and pharmacological properties.

The protein localises to the cell membrane. The protein resides in the apical cell membrane. It catalyses the reaction chloride(in) = chloride(out). In terms of biological role, pi subunit of the heteropentameric ligand-gated chloride channel gated by gamma-aminobutyric acid (GABA). GABA-gated chloride channels, also named GABA(A) receptors (GABAAR), consist of five subunits arranged around a central pore and contain GABA active binding site(s) located at the alpha and beta subunit interfaces. When activated by GABA, GABAARs selectively allow the flow of chloride anions across the cell membrane down their electrochemical gradient. Pi-containing GABAARs are mostly located in peripheral tissues. In the uterus, pi subunits modulate uterus contraction by altering the sensitivity of GABAARs to pregnanolone. In the lungs, pi-containing GABAARs contribute to pulmonary fluid transport via luminal secretion of chloride. The chain is Gamma-aminobutyric acid receptor subunit pi (GABRP) from Bos taurus (Bovine).